Consider the following 896-residue polypeptide: Chromatin assembly factor 1 subunit A-A (896 aa).

Disordered regions lie at residues 1-23 (MPGK…KKMV), 185-377 (TSTS…EEEK), and 552-610 (DSDE…DPEN). Polar residues predominate over residues 10 to 21 (VMQSSTKSNTKK). Low complexity predominate over residues 211–226 (ASVSSSSSPVSLSSPD). Residues 227-236 (AQTGSQFRNR) are compositionally biased toward polar residues. Low complexity predominate over residues 237-246 (SSPSTSTTPT). The span at 255–284 (SADKNKTKDKDKQRQAEKEERERAKKEARS) shows a compositional bias: basic and acidic residues. A compositionally biased stretch (basic residues) spans 285 to 302 (AKKKKRQGLLKNLQRKRG). Residues 308–377 (SGKEYKKEKK…EEKRLKEEEK (70 aa)) are compositionally biased toward basic and acidic residues. Composition is skewed to acidic residues over residues 552 to 563 (DSDEEWEEEEPG), 572 to 586 (ENDD…DDDG), and 595 to 607 (SDDE…ECTD). The interval 642 to 678 (CVWWDSKASEISLLQKFSACILESPAVDEELAQEISS) is necessary for homodimerization, competence for chromatin assembly. The interval 724-743 (SDAAGNESTSPNVTPQTPSN) is disordered. The span at 729 to 743 (NESTSPNVTPQTPSN) shows a compositional bias: polar residues.

The protein belongs to the CHAF1A family. In terms of assembly, homodimer.

The protein localises to the nucleus. In terms of biological role, involved in chromatin assembly in DNA replication and DNA repair. The sequence is that of Chromatin assembly factor 1 subunit A-A (chaf1a-a) from Xenopus laevis (African clawed frog).